A 455-amino-acid polypeptide reads, in one-letter code: Transmembrane protease serine 5 (455 aa).

The Cytoplasmic portion of the chain corresponds to methionine 1–cysteine 49. A helical; Signal-anchor for type II membrane protein membrane pass occupies residues valine 50 to leucine 70. Residues tyrosine 71–arginine 455 lie on the Extracellular side of the membrane. The region spanning phenylalanine 112–serine 207 is the SRCR domain. Disulfide bonds link cysteine 135–cysteine 196, cysteine 148–cysteine 206, cysteine 209–cysteine 328, cysteine 243–cysteine 259, cysteine 342–cysteine 411, cysteine 374–cysteine 390, and cysteine 401–cysteine 429. Asparagine 163 and asparagine 170 each carry an N-linked (GlcNAc...) asparagine glycan. The Peptidase S1 domain occupies isoleucine 218–glutamine 453. Catalysis depends on charge relay system residues histidine 258 and aspartate 308. N-linked (GlcNAc...) asparagine glycosylation is found at asparagine 319 and asparagine 375. Serine 405 acts as the Charge relay system in catalysis.

Belongs to the peptidase S1 family.

It is found in the cell membrane. May play a role in hearing. This is Transmembrane protease serine 5 (Tmprss5) from Mus musculus (Mouse).